We begin with the raw amino-acid sequence, 433 residues long: Serine/threonine-protein kinase KDX1 (433 aa).

The region spanning 23–318 is the Protein kinase domain; the sequence is FHLTGKIGRG…VEDALEHPYL (296 aa). ATP contacts are provided by residues 29-37 and K55; that span reads IGRGSHSLI. D153 acts as the Proton acceptor in catalysis.

The protein belongs to the protein kinase superfamily. Ser/Thr protein kinase family. In terms of assembly, interacts with RLM1.

It catalyses the reaction L-seryl-[protein] + ATP = O-phospho-L-seryl-[protein] + ADP + H(+). The catalysed reaction is L-threonyl-[protein] + ATP = O-phospho-L-threonyl-[protein] + ADP + H(+). Its function is as follows. Serine/threonine-protein kinase involved in the SLT2 mitogen-activated (MAP) kinase signaling pathway that regulates cell wall integrity. May also be involved in the mating pheromone and the CWI MAPK pathways. The protein is Serine/threonine-protein kinase KDX1 (KDX1) of Saccharomyces cerevisiae (strain ATCC 204508 / S288c) (Baker's yeast).